A 166-amino-acid chain; its full sequence is 2-C-methyl-D-erythritol 2,4-cyclodiphosphate synthase (166 aa).

Residues D15 and H17 each coordinate a divalent metal cation. Residues D15–H17 and H43–S44 each bind 4-CDP-2-C-methyl-D-erythritol 2-phosphate. Residue H51 participates in a divalent metal cation binding. 4-CDP-2-C-methyl-D-erythritol 2-phosphate is bound by residues D65–G67, T141–E144, and R151.

Belongs to the IspF family. Homotrimer. It depends on a divalent metal cation as a cofactor.

The catalysed reaction is 4-CDP-2-C-methyl-D-erythritol 2-phosphate = 2-C-methyl-D-erythritol 2,4-cyclic diphosphate + CMP. It functions in the pathway isoprenoid biosynthesis; isopentenyl diphosphate biosynthesis via DXP pathway; isopentenyl diphosphate from 1-deoxy-D-xylulose 5-phosphate: step 4/6. Involved in the biosynthesis of isopentenyl diphosphate (IPP) and dimethylallyl diphosphate (DMAPP), two major building blocks of isoprenoid compounds. Catalyzes the conversion of 4-diphosphocytidyl-2-C-methyl-D-erythritol 2-phosphate (CDP-ME2P) to 2-C-methyl-D-erythritol 2,4-cyclodiphosphate (ME-CPP) with a corresponding release of cytidine 5-monophosphate (CMP). This Synechococcus sp. (strain CC9311) protein is 2-C-methyl-D-erythritol 2,4-cyclodiphosphate synthase.